We begin with the raw amino-acid sequence, 465 residues long: Dihydrolipoyl dehydrogenase (465 aa).

FAD contacts are provided by residues 34–42 (EKREAGGTC), lysine 51, and glycine 114. Cysteine 42 and cysteine 47 form a disulfide bridge. NAD(+) contacts are provided by residues 180-184 (GGGVI), glutamate 203, valine 237, and 264-267 (SIGR). Positions 307 and 315 each coordinate FAD. The Proton acceptor role is filled by histidine 439.

This sequence belongs to the class-I pyridine nucleotide-disulfide oxidoreductase family. FAD serves as cofactor.

It localises to the cytoplasm. The enzyme catalyses N(6)-[(R)-dihydrolipoyl]-L-lysyl-[protein] + NAD(+) = N(6)-[(R)-lipoyl]-L-lysyl-[protein] + NADH + H(+). The branched-chain alpha-keto dehydrogenase complex catalyzes the overall conversion of alpha-keto acids to acyl-CoA and CO(2). It contains multiple copies of 3 enzymatic components: branched-chain alpha-keto acid decarboxylase (E1), lipoamide acyltransferase (E2) and lipoamide dehydrogenase (E3). The sequence is that of Dihydrolipoyl dehydrogenase (lpdA) from Chlamydia trachomatis serovar D (strain ATCC VR-885 / DSM 19411 / UW-3/Cx).